The chain runs to 37 residues: Large ribosomal subunit protein bL36c (37 aa).

It belongs to the bacterial ribosomal protein bL36 family.

The protein localises to the plastid. The sequence is that of Large ribosomal subunit protein bL36c (rpl36) from Epifagus virginiana (Beechdrops).